Consider the following 117-residue polypeptide: Large ribosomal subunit protein uL18 (117 aa).

This sequence belongs to the universal ribosomal protein uL18 family. In terms of assembly, part of the 50S ribosomal subunit; part of the 5S rRNA/L5/L18/L25 subcomplex. Contacts the 5S and 23S rRNAs.

This is one of the proteins that bind and probably mediate the attachment of the 5S RNA into the large ribosomal subunit, where it forms part of the central protuberance. In Vibrio cholerae serotype O1 (strain ATCC 39541 / Classical Ogawa 395 / O395), this protein is Large ribosomal subunit protein uL18.